The following is a 2832-amino-acid chain: Cyclic beta-(1,2)-glucan synthase NdvB (2832 aa).

The next 7 helical transmembrane spans lie at 411-431 (FAIA…VYAF), 444-464 (IMLL…FNTV), 810-830 (LIPV…EPTP), 831-851 (ALIW…LSLI), 880-900 (QVAL…DAIV), 938-958 (WTAP…DTGL), and 959-979 (PFIG…AWFV). The region spanning 1299 to 1506 (LASEARLTSL…NGQLREWFHA (208 aa)) is the Glycoamylase-like domain.

Belongs to the NdvB family.

The protein resides in the cell inner membrane. The enzyme catalyses [(1-&gt;2)-beta-D-glucosyl](n) + UDP-alpha-D-glucose = [(1-&gt;2)-beta-D-glucosyl](n+1) + UDP + H(+). In terms of biological role, involved in the biosynthesis of cyclic beta-(1,2)-glucan. It seems that NdvB is involved in three enzymatic activities. First, it may catalyze the transfer of the first glucose from UDP-Glc to an unknown amino acid. In the second enzymatic activity (UDP-Glc:beta-(1,2) oligosaccharide glucosyltransferase), it may be responsible for chain elongation. Finally, in the third activity, it may catalyze glucan cyclization and release from the protein. NdvB is also involved in nodule invasion and in bacteroid development. This Rhizobium meliloti (strain 1021) (Ensifer meliloti) protein is Cyclic beta-(1,2)-glucan synthase NdvB.